The chain runs to 266 residues: Ribosomal RNA small subunit methyltransferase A (266 aa).

Residues Asn11, Leu13, Gly37, Glu57, Asp85, and Asn104 each contribute to the S-adenosyl-L-methionine site.

The protein belongs to the class I-like SAM-binding methyltransferase superfamily. rRNA adenine N(6)-methyltransferase family. RsmA subfamily.

The protein localises to the cytoplasm. It carries out the reaction adenosine(1518)/adenosine(1519) in 16S rRNA + 4 S-adenosyl-L-methionine = N(6)-dimethyladenosine(1518)/N(6)-dimethyladenosine(1519) in 16S rRNA + 4 S-adenosyl-L-homocysteine + 4 H(+). Functionally, specifically dimethylates two adjacent adenosines (A1518 and A1519) in the loop of a conserved hairpin near the 3'-end of 16S rRNA in the 30S particle. May play a critical role in biogenesis of 30S subunits. The polypeptide is Ribosomal RNA small subunit methyltransferase A (Campylobacter jejuni subsp. jejuni serotype O:2 (strain ATCC 700819 / NCTC 11168)).